A 210-amino-acid polypeptide reads, in one-letter code: Small ribosomal subunit protein uS5 (210 aa).

A compositionally biased stretch (polar residues) spans Met-1 to Asn-11. Residues Met-1–Glu-56 are disordered. A compositionally biased stretch (low complexity) spans Glu-18–Arg-29. A compositionally biased stretch (basic and acidic residues) spans Gly-32 to Glu-56. An S5 DRBM domain is found at Trp-54–Val-117.

It belongs to the universal ribosomal protein uS5 family. Part of the 30S ribosomal subunit. Contacts proteins S4 and S8.

With S4 and S12 plays an important role in translational accuracy. Its function is as follows. Located at the back of the 30S subunit body where it stabilizes the conformation of the head with respect to the body. The sequence is that of Small ribosomal subunit protein uS5 from Prochlorococcus marinus (strain MIT 9303).